The chain runs to 211 residues: MIKVGILGPVGSGKTSLIEFLAKEYSERGIKVGILTNDVVSAYDAMRIYHNLVERLRILPRENVLGLVTGGCPHTAIREDPSLNLRALETLEERANPDLVFIESGGDNVMSTFSSSLADFTIFVLDTSAGDKYPGKGGIGITESDLLVVNKIDLAPYVQADLNKMREDSLRVRRGKPSVFISLKTGEGTRELIRILDEELGLERVFGNKGQ.

Residue 8-15 coordinates GTP; the sequence is GPVGSGKT.

This sequence belongs to the SIMIBI class G3E GTPase family. UreG subfamily. Homodimer. UreD, UreF and UreG form a complex that acts as a GTP-hydrolysis-dependent molecular chaperone, activating the urease apoprotein by helping to assemble the nickel containing metallocenter of UreC. The UreE protein probably delivers the nickel.

The protein localises to the cytoplasm. Facilitates the functional incorporation of the urease nickel metallocenter. This process requires GTP hydrolysis, probably effectuated by UreG. In Metallosphaera sedula (strain ATCC 51363 / DSM 5348 / JCM 9185 / NBRC 15509 / TH2), this protein is Urease accessory protein UreG.